Reading from the N-terminus, the 356-residue chain is Dihydroorotate dehydrogenase (quinone) (356 aa).

Residues 60–64 (AGFDK) and Ser-84 contribute to the FMN site. Lys-64 provides a ligand contact to substrate. Residue 109–113 (NRFGF) coordinates substrate. FMN contacts are provided by Asn-140 and Asn-171. Substrate is bound at residue Asn-171. Residue Ser-174 is the Nucleophile of the active site. Asn-176 contacts substrate. Lys-216 and Gly-244 together coordinate FMN. Position 245–246 (245–246 (NT)) interacts with substrate. FMN-binding positions include Gly-267, Gly-296, and 317 to 318 (YS).

This sequence belongs to the dihydroorotate dehydrogenase family. Type 2 subfamily. In terms of assembly, monomer. Requires FMN as cofactor.

It is found in the cell membrane. The enzyme catalyses (S)-dihydroorotate + a quinone = orotate + a quinol. It participates in pyrimidine metabolism; UMP biosynthesis via de novo pathway; orotate from (S)-dihydroorotate (quinone route): step 1/1. Its function is as follows. Catalyzes the conversion of dihydroorotate to orotate with quinone as electron acceptor. The sequence is that of Dihydroorotate dehydrogenase (quinone) from Azorhizobium caulinodans (strain ATCC 43989 / DSM 5975 / JCM 20966 / LMG 6465 / NBRC 14845 / NCIMB 13405 / ORS 571).